Here is a 233-residue protein sequence, read N- to C-terminus: 7-cyano-7-deazaguanine synthase (233 aa).

Position 18–28 (18–28 (FSGGQDSTTCL)) interacts with ATP. Positions 198, 213, 216, and 219 each coordinate Zn(2+).

The protein belongs to the QueC family. It depends on Zn(2+) as a cofactor.

The enzyme catalyses 7-carboxy-7-deazaguanine + NH4(+) + ATP = 7-cyano-7-deazaguanine + ADP + phosphate + H2O + H(+). It participates in purine metabolism; 7-cyano-7-deazaguanine biosynthesis. In terms of biological role, catalyzes the ATP-dependent conversion of 7-carboxy-7-deazaguanine (CDG) to 7-cyano-7-deazaguanine (preQ(0)). This chain is 7-cyano-7-deazaguanine synthase, found in Wolinella succinogenes (strain ATCC 29543 / DSM 1740 / CCUG 13145 / JCM 31913 / LMG 7466 / NCTC 11488 / FDC 602W) (Vibrio succinogenes).